Reading from the N-terminus, the 340-residue chain is Geranylgeranyl pyrophosphate synthase atmG (340 aa).

The segment covering 19–48 has biased composition (polar residues); that stretch reads NLDASYPTSSSLSTEPIDTRSSSPQGSAST. Residues 19-51 form a disordered region; sequence NLDASYPTSSSLSTEPIDTRSSSPQGSASTPVD. Residues Lys69, Arg72, and His101 each contribute to the isopentenyl diphosphate site. Positions 108 and 112 each coordinate Mg(2+). Arg117 contacts dimethylallyl diphosphate. Residue Arg118 coordinates isopentenyl diphosphate. Residues Lys195, Thr196, and Gln229 each contribute to the dimethylallyl diphosphate site. Asp232 is a Mg(2+) binding site. Positions 236, 246, and 256 each coordinate dimethylallyl diphosphate.

It belongs to the FPP/GGPP synthase family. Mg(2+) is required as a cofactor.

It carries out the reaction isopentenyl diphosphate + dimethylallyl diphosphate = (2E)-geranyl diphosphate + diphosphate. The enzyme catalyses isopentenyl diphosphate + (2E)-geranyl diphosphate = (2E,6E)-farnesyl diphosphate + diphosphate. The catalysed reaction is isopentenyl diphosphate + (2E,6E)-farnesyl diphosphate = (2E,6E,10E)-geranylgeranyl diphosphate + diphosphate. In terms of biological role, geranylgeranyl pyrophosphate synthase; part of the ATM1 gene cluster that mediates the biosynthesis of aflatrem, a tremorgenic mycotoxin with acute neurotoxic effects. Synthesis of geranylgeranyl diphosphate (GGPP) by AtmG (a GGPP synthase) precedes condensation of GGPP with indole 3-glycerol phosphate, followed by epoxidation and cyclization by AtmM (a FAD-dependent monooxygenase) and AtmC (a prenyltransferase) to produce paspaline. AtmB is also essential for paspaline production, but its exact role has not been identified yet. AtmP, a cytochrome P450 monooxygenase, subsequently converts paspaline to 13-desoxypaxilline via PC-M6 by removal of the C-30 methyl group and oxidation at C-10. AtmQ, a cytochrome P450 monooxygenase, then catalyzes the oxidation of 13-desoxypaxilline, first at C-7 to produce paspalicine and then at C-13 to form paspalinine. Finally, AtmD prenylates paspalinine to form aflatrem. This chain is Geranylgeranyl pyrophosphate synthase atmG, found in Aspergillus flavus.